The chain runs to 1046 residues: DNA-directed RNA polymerase subunit beta' (1046 aa).

Mg(2+) contacts are provided by Asp383, Asp385, and Asp387. Cys752, Cys826, Cys833, and Cys836 together coordinate Zn(2+).

This sequence belongs to the RNA polymerase beta' chain family. The RNAP catalytic core consists of 2 alpha, 1 beta, 1 beta' and 1 omega subunit. When a sigma factor is associated with the core the holoenzyme is formed, which can initiate transcription. Mg(2+) is required as a cofactor. Zn(2+) serves as cofactor.

The catalysed reaction is RNA(n) + a ribonucleoside 5'-triphosphate = RNA(n+1) + diphosphate. DNA-dependent RNA polymerase catalyzes the transcription of DNA into RNA using the four ribonucleoside triphosphates as substrates. The sequence is that of DNA-directed RNA polymerase subunit beta' from Weissella hellenica.